The primary structure comprises 357 residues: Phenylalanine--tRNA ligase alpha subunit (357 aa).

Glu278 serves as a coordination point for Mg(2+).

This sequence belongs to the class-II aminoacyl-tRNA synthetase family. Phe-tRNA synthetase alpha subunit type 1 subfamily. As to quaternary structure, tetramer of two alpha and two beta subunits. The cofactor is Mg(2+).

The protein resides in the cytoplasm. It catalyses the reaction tRNA(Phe) + L-phenylalanine + ATP = L-phenylalanyl-tRNA(Phe) + AMP + diphosphate + H(+). The sequence is that of Phenylalanine--tRNA ligase alpha subunit from Albidiferax ferrireducens (strain ATCC BAA-621 / DSM 15236 / T118) (Rhodoferax ferrireducens).